Consider the following 167-residue polypeptide: Interferon gamma (167 aa).

The first 23 residues, 1–23 (MNYTGYLLAFQLCIILGSSSCYC), serve as a signal peptide directing secretion. Q24 is subject to Pyrrolidone carboxylic acid. N-linked (GlcNAc...) asparagine glycosylation is found at N39 and N105. Positions 148–167 (SNLRKRKRSQSTFHGRRASI) are disordered. Over residues 149–167 (NLRKRKRSQSTFHGRRASI) the composition is skewed to basic residues.

The protein belongs to the type II (or gamma) interferon family. In terms of assembly, homodimer. Interacts with IFNGR1 (via extracellular domain); this interaction promotes IFNGR1 dimerization. As to expression, released primarily from activated T lymphocytes.

Its subcellular location is the secreted. In terms of biological role, type II interferon produced by immune cells such as T-cells and NK cells that plays crucial roles in antimicrobial, antiviral, and antitumor responses by activating effector immune cells and enhancing antigen presentation. Primarily signals through the JAK-STAT pathway after interaction with its receptor IFNGR1 to affect gene regulation. Upon IFNG binding, IFNGR1 intracellular domain opens out to allow association of downstream signaling components JAK2, JAK1 and STAT1, leading to STAT1 activation, nuclear translocation and transcription of IFNG-regulated genes. Many of the induced genes are transcription factors such as IRF1 that are able to further drive regulation of a next wave of transcription. Plays a role in class I antigen presentation pathway by inducing a replacement of catalytic proteasome subunits with immunoproteasome subunits. In turn, increases the quantity, quality, and repertoire of peptides for class I MHC loading. Increases the efficiency of peptide generation also by inducing the expression of activator PA28 that associates with the proteasome and alters its proteolytic cleavage preference. Up-regulates as well MHC II complexes on the cell surface by promoting expression of several key molecules such as cathepsins B/CTSB, H/CTSH, and L/CTSL. Participates in the regulation of hematopoietic stem cells during development and under homeostatic conditions by affecting their development, quiescence, and differentiation. In Dasypus novemcinctus (Nine-banded armadillo), this protein is Interferon gamma (IFNG).